Consider the following 513-residue polypeptide: Maturase K (513 aa).

The protein belongs to the intron maturase 2 family. MatK subfamily.

It is found in the plastid. The protein localises to the chloroplast. Usually encoded in the trnK tRNA gene intron. Probably assists in splicing its own and other chloroplast group II introns. This Phragmites australis (Common reed) protein is Maturase K.